Consider the following 173-residue polypeptide: Lipoprotein signal peptidase (173 aa).

The next 3 membrane-spanning stretches (helical) occupy residues phenylalanine 11–threonine 31, threonine 69–methionine 89, and glutamine 93–valine 113. Residues aspartate 123 and aspartate 142 contribute to the active site. The helical transmembrane segment at proline 134 to alanine 154 threads the bilayer.

It belongs to the peptidase A8 family.

It localises to the cell inner membrane. It carries out the reaction Release of signal peptides from bacterial membrane prolipoproteins. Hydrolyzes -Xaa-Yaa-Zaa-|-(S,diacylglyceryl)Cys-, in which Xaa is hydrophobic (preferably Leu), and Yaa (Ala or Ser) and Zaa (Gly or Ala) have small, neutral side chains.. Its pathway is protein modification; lipoprotein biosynthesis (signal peptide cleavage). In terms of biological role, this protein specifically catalyzes the removal of signal peptides from prolipoproteins. This Sphingopyxis alaskensis (strain DSM 13593 / LMG 18877 / RB2256) (Sphingomonas alaskensis) protein is Lipoprotein signal peptidase.